Consider the following 272-residue polypeptide: Indole-3-glycerol phosphate synthase (272 aa).

Belongs to the TrpC family.

It catalyses the reaction 1-(2-carboxyphenylamino)-1-deoxy-D-ribulose 5-phosphate + H(+) = (1S,2R)-1-C-(indol-3-yl)glycerol 3-phosphate + CO2 + H2O. It participates in amino-acid biosynthesis; L-tryptophan biosynthesis; L-tryptophan from chorismate: step 4/5. The chain is Indole-3-glycerol phosphate synthase from Arthrobacter sp. (strain FB24).